The primary structure comprises 25 residues: Oxyopinin-3c (25 aa).

In terms of tissue distribution, expressed by the venom gland.

The protein resides in the secreted. Functionally, may have cytolytic and antimicrobial activity. The protein is Oxyopinin-3c of Oxyopes takobius (Lynx spider).